Reading from the N-terminus, the 186-residue chain is Ribosome-recycling factor (186 aa).

This sequence belongs to the RRF family.

The protein resides in the cytoplasm. Functionally, responsible for the release of ribosomes from messenger RNA at the termination of protein biosynthesis. May increase the efficiency of translation by recycling ribosomes from one round of translation to another. The sequence is that of Ribosome-recycling factor from Rickettsia bellii (strain OSU 85-389).